A 184-amino-acid polypeptide reads, in one-letter code: ESX-1 secretion-associated protein EspD (184 aa).

Positions 33 to 56 are disordered; it reads IGVGSAATPDTGPDLDNAHGQAET.

It localises to the secreted. Required for ESX-1 function. Required for the maintenance of adequate cellular levels of both EspA and EspC. Facilitates EsxA secretion. This Mycobacterium tuberculosis (strain CDC 1551 / Oshkosh) protein is ESX-1 secretion-associated protein EspD.